The primary structure comprises 470 residues: Histone deacetylase HOS1 (470 aa).

The tract at residues 47–392 (LTFPYARKDD…YTYLTWCVTK (346 aa)) is histone deacetylase. At Ser-110 the chain carries Phosphoserine. His-211 is a catalytic residue.

This sequence belongs to the histone deacetylase family. HD type 1 subfamily.

The protein localises to the nucleus. It catalyses the reaction N(6)-acetyl-L-lysyl-[histone] + H2O = L-lysyl-[histone] + acetate. Responsible for the deacetylation of lysine residues on the N-terminal part of the core histones (H2A, H2B, H3 and H4). Histone deacetylation plays an important role in transcriptional regulation, cell cycle progression and developmental events. Histone deacetylases act via the formation of large multiprotein complexes. The protein is Histone deacetylase HOS1 (HOS1) of Saccharomyces cerevisiae (strain ATCC 204508 / S288c) (Baker's yeast).